Here is a 165-residue protein sequence, read N- to C-terminus: Myosin regulatory light chain 2, ventricular/cardiac muscle isoform (165 aa).

Ser2 carries the n,N,N-trimethylserine modification. A Deamidated asparagine modification is found at Asn14. Ser15 and Ser19 each carry phosphoserine. EF-hand domains lie at Thr24 to Val59, Asp94 to Arg129, and Phe130 to Lys165. Ca(2+) is bound by residues Asp37, Asn39, Asp41, and Asp48. At Thr52 the chain carries Phosphothreonine.

Myosin is a hexamer of 2 heavy chains and 4 light chains. Interacts with MYOC. In terms of processing, N-terminus is methylated by METTL11A/NTM1. Phosphorylated by MYLK3 and MYLK2; promotes cardiac muscle contraction and function. Dephosphorylated by PPP1CB complexed to PPP1R12B. The phosphorylated form in adult is expressed as gradients across the heart from endocardium (low phosphorylation) to epicardium (high phosphorylation); regulates cardiac torsion and workload distribution.

Its subcellular location is the cytoplasm. It localises to the myofibril. It is found in the sarcomere. The protein localises to the a band. Functionally, contractile protein that plays a role in heart development and function. Following phosphorylation, plays a role in cross-bridge cycling kinetics and cardiac muscle contraction by increasing myosin lever arm stiffness and promoting myosin head diffusion; as a consequence of the increase in maximum contraction force and calcium sensitivity of contraction force. These events altogether slow down myosin kinetics and prolong duty cycle resulting in accumulated myosins being cooperatively recruited to actin binding sites to sustain thin filament activation as a means to fine-tune myofilament calcium sensitivity to force. During cardiogenesis plays an early role in cardiac contractility by promoting cardiac myofibril assembly. The polypeptide is Myosin regulatory light chain 2, ventricular/cardiac muscle isoform (Oryctolagus cuniculus (Rabbit)).